Consider the following 365-residue polypeptide: MNLAAMDPQTYDTQLEHKRIKLEQAFAQFETPSVEVFASEPANYRMRAEFRMWHDGDDLYYYMFDKVLNEKVRCDQYLPASVLINQMMSALIAELKPNPSLRHKLFQVDFLSTLSGEILVSLLYHRQLDDQWRADAAALKTKLSSQFNVNIIGRARKQKIDLDKDFVVESLQVNDKTFLYKQIENSFTQPNAKVSVKMLEWAIDATQDSEGDLLELYCGNGNFSIALAQNFNRVLATELAKPSVDAAQYNIEVNGIENLQIIRMSAEDFSDAMAKKRSFRRLEGIDLDSYVCNTIFVDPPRAGIDPDTLALVQGYERILYISCNPETLKDNLQLLNETHKVTRFALFDQFPYTEHMETGVLLERR.

5 residues coordinate S-adenosyl-L-methionine: Gln-189, Tyr-217, Asn-222, Glu-238, and Asp-298. Residue Cys-323 is the Nucleophile of the active site. The active-site Proton acceptor is the Glu-357.

The protein belongs to the class I-like SAM-binding methyltransferase superfamily. RNA M5U methyltransferase family. TrmA subfamily.

It carries out the reaction uridine(54) in tRNA + S-adenosyl-L-methionine = 5-methyluridine(54) in tRNA + S-adenosyl-L-homocysteine + H(+). The catalysed reaction is uridine(341) in tmRNA + S-adenosyl-L-methionine = 5-methyluridine(341) in tmRNA + S-adenosyl-L-homocysteine + H(+). Its function is as follows. Dual-specificity methyltransferase that catalyzes the formation of 5-methyluridine at position 54 (m5U54) in all tRNAs, and that of position 341 (m5U341) in tmRNA (transfer-mRNA). The sequence is that of tRNA/tmRNA (uracil-C(5))-methyltransferase from Shewanella baltica (strain OS185).